A 742-amino-acid chain; its full sequence is Photosystem I P700 chlorophyll a apoprotein A2 (742 aa).

The next 8 membrane-spanning stretches (helical) occupy residues leucine 46–alanine 69, leucine 135–glutamine 158, leucine 175–isoleucine 199, isoleucine 273–tyrosine 291, leucine 336–glycine 359, serine 375–valine 401, alanine 423–histidine 445, and phenylalanine 525–isoleucine 543. Positions 567 and 576 each coordinate [4Fe-4S] cluster. 2 helical membrane passes run alanine 583–tryptophan 604 and leucine 651–isoleucine 673. Positions 662, 670, and 678 each coordinate divinyl chlorophyll a. Tryptophan 679 lines the phylloquinone pocket. A helical transmembrane segment spans residues leucine 715–alanine 735.

It belongs to the PsaA/PsaB family. As to quaternary structure, the PsaA/B heterodimer binds the P700 divinyl chlorophyll special pair and subsequent electron acceptors. PSI consists of a core antenna complex that captures photons, and an electron transfer chain that converts photonic excitation into a charge separation. The cyanobacterial PSI reaction center is composed of one copy each of PsaA,B,C,D,E,F,I,J,K,L,M and X, and forms trimeric complexes. The cofactor is PSI electron transfer chain: 5 divinyl chlorophyll a, 1 divinyl chlorophyll a', 2 phylloquinones and 3 4Fe-4S clusters. PSI core antenna: 90 divinyl chlorophyll a, 22 carotenoids, 3 phospholipids and 1 galactolipid. P700 is a divinyl chlorophyll a/divinyl chlorophyll a' dimer, A0 is one or more divinyl chlorophyll a, A1 is one or both phylloquinones and FX is a shared 4Fe-4S iron-sulfur center..

The protein localises to the cellular thylakoid membrane. It catalyses the reaction reduced [plastocyanin] + hnu + oxidized [2Fe-2S]-[ferredoxin] = oxidized [plastocyanin] + reduced [2Fe-2S]-[ferredoxin]. Functionally, psaA and PsaB bind P700, the primary electron donor of photosystem I (PSI), as well as the electron acceptors A0, A1 and FX. PSI is a plastocyanin/cytochrome c6-ferredoxin oxidoreductase, converting photonic excitation into a charge separation, which transfers an electron from the donor P700 chlorophyll pair to the spectroscopically characterized acceptors A0, A1, FX, FA and FB in turn. Oxidized P700 is reduced on the lumenal side of the thylakoid membrane by plastocyanin or cytochrome c6. This is Photosystem I P700 chlorophyll a apoprotein A2 from Prochlorococcus marinus (strain MIT 9515).